A 393-amino-acid chain; its full sequence is Elongation factor Tu (393 aa).

The 194-residue stretch at 10–203 (KPHVNIGTIG…AVDAFIPDPV (194 aa)) folds into the tr-type G domain. The interval 19–26 (GHVDHGKT) is G1. 19–26 (GHVDHGKT) is a binding site for GTP. Mg(2+) is bound at residue Thr-26. The interval 60-64 (GITIS) is G2. Positions 81–84 (DCPG) are G3. Residues 81–85 (DCPGH) and 136–139 (NKVD) contribute to the GTP site. The tract at residues 136–139 (NKVD) is G4. Positions 173-175 (SAL) are G5.

It belongs to the TRAFAC class translation factor GTPase superfamily. Classic translation factor GTPase family. EF-Tu/EF-1A subfamily. Monomer.

The protein localises to the cytoplasm. The catalysed reaction is GTP + H2O = GDP + phosphate + H(+). In terms of biological role, GTP hydrolase that promotes the GTP-dependent binding of aminoacyl-tRNA to the A-site of ribosomes during protein biosynthesis. The protein is Elongation factor Tu of Chlorobium chlorochromatii (strain CaD3).